Consider the following 786-residue polypeptide: DENN domain-containing protein 1C (786 aa).

The uDENN domain occupies 13–158 (FDWFFEAGCP…MDSSITVRSE (146 aa)). One can recognise a cDENN domain in the interval 182–318 (SLPSIPENRN…VVSLLRLRLR (137 aa)). The dDENN domain occupies 320 to 398 (VALSPGEGVS…ESRLEKLNAG (79 aa)). The short motif at 401-405 (FSDQF) is the FXDXF motif element. The tract at residues 481–553 (KDGDSGLQRG…LSPGDTQNPW (73 aa)) is disordered. Positions 527–541 (LKTEEGPSEPLRERS) are enriched in basic and acidic residues. The span at 542-552 (PTLSPGDTQNP) shows a compositional bias: polar residues. Residue serine 565 is modified to Phosphoserine. Residues 570–579 (DLLSEILDSL) carry the Clathrin box motif. Disordered stretches follow at residues 653–741 (YSKN…QPPQ) and 762–786 (SHVSTQQRPQDKQPRVADLKKCFEN). Residues 657–675 (SCSQPFQQSPPSQGDPGPS) show a composition bias toward low complexity. The segment covering 706–740 (LLVSTEPNSDAVQRLQSISSPSCSHSAENPRNQPP) has biased composition (polar residues). Residues 770-786 (PQDKQPRVADLKKCFEN) show a composition bias toward basic and acidic residues.

In terms of assembly, exhibits low nucleotide-independent RAB35-binding activity. Interacts with clathrin heavy chain/CLTC and with AP2A2, but not with AP2B1.

Its subcellular location is the cytoplasm. The protein resides in the cytosol. The protein localises to the cytoplasmic vesicle. It localises to the clathrin-coated vesicle. Functionally, guanine nucleotide exchange factor (GEF) which may activate RAB8A, RAB13 and RAB35. Promotes the exchange of GDP to GTP, converting inactive GDP-bound Rab proteins into their active GTP-bound form. This chain is DENN domain-containing protein 1C (Dennd1c), found in Mus musculus (Mouse).